A 184-amino-acid chain; its full sequence is Envelope protein 169 (184 aa).

Residues 1–6 (MKKYIK) lie on the Intravirion side of the membrane. A helical membrane pass occupies residues 7 to 27 (MYLVLLIAIILFITILVIFLI). Residues 28–184 (SGLFYPEQNP…TVMAIPRKVL (157 aa)) lie on the Virion surface side of the membrane.

Belongs to the asfivirus envelope protein p22 family.

It localises to the virion membrane. The protein resides in the host cell membrane. The sequence is that of Envelope protein 169 from Ornithodoros (relapsing fever ticks).